We begin with the raw amino-acid sequence, 173 residues long: Co-chaperone protein HscB homolog (173 aa).

The J domain occupies 5–77; it reads CHFALFELQP…AQRARYLLTI (73 aa).

This sequence belongs to the HscB family. In terms of assembly, interacts with HscA and stimulates its ATPase activity.

In terms of biological role, co-chaperone involved in the maturation of iron-sulfur cluster-containing proteins. Seems to help targeting proteins to be folded toward HscA. The sequence is that of Co-chaperone protein HscB homolog from Pseudomonas fluorescens (strain Pf0-1).